The chain runs to 102 residues: Salivary protein Salp9 (102 aa).

The N-terminal stretch at 1–21 (MGLTEIMLVLVSLAFVATAAA) is a signal peptide. 2 N-linked (GlcNAc...) asparagine glycosylation sites follow: Asn-26 and Asn-87. The segment at 83–102 (SGVPNDTDAKIEETEEELEA) is disordered.

It belongs to the salp14 family. Salivary gland (at protein level). Saliva (at protein level). Midgut.

It is found in the secreted. Its function is as follows. Salivary protein that facilitates blood feeding of adult ticks on vertebrate species. Inhibits the lectin pathway of complement system activation in the host. This Ixodes scapularis (Black-legged tick) protein is Salivary protein Salp9.